Consider the following 106-residue polypeptide: Glutaredoxin-1 (106 aa).

N-acetylalanine is present on alanine 1. The Glutaredoxin domain occupies 2-105 (QEFVNSKIQP…ARLKEMGALR (104 aa)). Lysine 8 is subject to N6-succinyllysine. 2 disulfides stabilise this stretch: cysteine 22/cysteine 25 and cysteine 78/cysteine 82.

Belongs to the glutaredoxin family.

It is found in the cytoplasm. Its function is as follows. Has a glutathione-disulfide oxidoreductase activity in the presence of NADPH and glutathione reductase. Reduces low molecular weight disulfides and proteins. This chain is Glutaredoxin-1 (GLRX), found in Oryctolagus cuniculus (Rabbit).